Here is a 769-residue protein sequence, read N- to C-terminus: Homoaconitase, mitochondrial (769 aa).

A mitochondrion-targeting transit peptide spans 1–28; it reads MQSRLLPSGPGRRWISLRVPNTPQRRAF. [4Fe-4S] cluster contacts are provided by Cys-391, Cys-460, and Cys-463.

The protein belongs to the aconitase/IPM isomerase family. Requires [4Fe-4S] cluster as cofactor.

It localises to the mitochondrion. It catalyses the reaction (2R,3S)-homoisocitrate = cis-homoaconitate + H2O. It functions in the pathway amino-acid biosynthesis; L-lysine biosynthesis via AAA pathway; L-alpha-aminoadipate from 2-oxoglutarate: step 3/5. Functionally, catalyzes the reversible hydration of cis-homoaconitate to (2R,3S)-homoisocitrate, a step in the alpha-aminoadipate pathway for lysine biosynthesis. In Aspergillus niger (strain ATCC MYA-4892 / CBS 513.88 / FGSC A1513), this protein is Homoaconitase, mitochondrial (lysA).